The sequence spans 566 residues: DNA ligase B (566 aa).

The N6-AMP-lysine intermediate role is filled by K125.

The protein belongs to the NAD-dependent DNA ligase family. LigB subfamily.

The catalysed reaction is NAD(+) + (deoxyribonucleotide)n-3'-hydroxyl + 5'-phospho-(deoxyribonucleotide)m = (deoxyribonucleotide)n+m + AMP + beta-nicotinamide D-nucleotide.. In terms of biological role, catalyzes the formation of phosphodiester linkages between 5'-phosphoryl and 3'-hydroxyl groups in double-stranded DNA using NAD as a coenzyme and as the energy source for the reaction. In Pseudomonas putida (strain ATCC 47054 / DSM 6125 / CFBP 8728 / NCIMB 11950 / KT2440), this protein is DNA ligase B.